The following is a 1335-amino-acid chain: Phospholipid-transporting ATPase IK (1335 aa).

The Cytoplasmic segment spans residues Met1 to Asn74. The helical transmembrane segment at Leu75–Phe95 threads the bilayer. The Exoplasmic loop portion of the chain corresponds to Thr96–Ala295. A helical transmembrane segment spans residues Leu296 to Val316. Residues Lys317–Phe339 lie on the Cytoplasmic side of the membrane. Residues Phe340–Ile360 traverse the membrane as a helical segment. The Exoplasmic loop segment spans residues Ala361–Tyr917. Catalysis depends on Asp407, which acts as the 4-aspartylphosphate intermediate. Asp407, Lys408, Thr409, Glu504, Phe545, Lys568, Arg601, Thr681, Gly682, Asp683, Arg831, and Lys837 together coordinate ATP. Asp407 provides a ligand contact to Mg(2+). Thr409 is a binding site for Mg(2+). Position 857 (Asp857) interacts with Mg(2+). Residues Asn860 and Asp861 each coordinate ATP. Asp861 lines the Mg(2+) pocket. The chain crosses the membrane as a helical span at residues Phe918 to Phe938. Residues Ser939–Gly946 are Cytoplasmic-facing. A helical transmembrane segment spans residues Trp947–Phe967. Residues Glu968–Ser995 are Exoplasmic loop-facing. The helical transmembrane segment at Ile996–Val1016 threads the bilayer. Topologically, residues Met1017–Ser1033 are cytoplasmic. Residues Leu1034–Val1054 form a helical membrane-spanning segment. Residue Lys1055 is a topological domain, exoplasmic loop. A helical transmembrane segment spans residues Tyr1056–Thr1076. The Cytoplasmic portion of the chain corresponds to Ser1077–Glu1104. Residues Pro1105–Leu1125 traverse the membrane as a helical segment. Residues Arg1126 to Ser1335 are Exoplasmic loop-facing. 3 disordered regions span residues Val1192–Asn1215, Phe1236–Leu1280, and Ser1314–Ser1335. Composition is skewed to polar residues over residues Pro1246 to Lys1255 and Gln1266 to Ser1276.

Belongs to the cation transport ATPase (P-type) (TC 3.A.3) family. Type IV subfamily. The cofactor is Mg(2+). In terms of tissue distribution, expressed in testis, specifically in spermatids within seminiferous tubules (at protein level).

It localises to the cytoplasmic vesicle. It is found in the secretory vesicle. Its subcellular location is the acrosome membrane. The protein resides in the endoplasmic reticulum membrane. The catalysed reaction is ATP + H2O + phospholipidSide 1 = ADP + phosphate + phospholipidSide 2.. It carries out the reaction a 1,2-diacyl-sn-glycero-3-phospho-L-serine(out) + ATP + H2O = a 1,2-diacyl-sn-glycero-3-phospho-L-serine(in) + ADP + phosphate + H(+). P4-ATPase flippase which catalyzes the hydrolysis of ATP coupled to the transport of aminophospholipids from the outer to the inner leaflet of various membranes and ensures the maintenance of asymmetric distribution of phospholipids. Phospholipid translocation also seems to be implicated in vesicle formation and in uptake of lipid signaling molecules. May be responsible for the maintenance of asymmetric distribution of phosphatidylserine (PS) in spermatozoa membranes. Involved in acrosome reactions and binding of spermatozoa to zona pellucida. This is Phospholipid-transporting ATPase IK from Mus musculus (Mouse).